A 124-amino-acid polypeptide reads, in one-letter code: Small ribosomal subunit protein uS12 (124 aa).

A 3-methylthioaspartic acid modification is found at Asp89. The disordered stretch occupies residues 105 to 124; sequence SGVSDRRQGRSKYGAKRPKS. Basic residues predominate over residues 113-124; the sequence is GRSKYGAKRPKS.

This sequence belongs to the universal ribosomal protein uS12 family. As to quaternary structure, part of the 30S ribosomal subunit. Contacts proteins S8 and S17. May interact with IF1 in the 30S initiation complex.

With S4 and S5 plays an important role in translational accuracy. Its function is as follows. Interacts with and stabilizes bases of the 16S rRNA that are involved in tRNA selection in the A site and with the mRNA backbone. Located at the interface of the 30S and 50S subunits, it traverses the body of the 30S subunit contacting proteins on the other side and probably holding the rRNA structure together. The combined cluster of proteins S8, S12 and S17 appears to hold together the shoulder and platform of the 30S subunit. In Colwellia psychrerythraea (strain 34H / ATCC BAA-681) (Vibrio psychroerythus), this protein is Small ribosomal subunit protein uS12.